We begin with the raw amino-acid sequence, 44 residues long: Thymosin beta-4 (44 aa).

Residues 1 to 44 are disordered; the sequence is MSDKPDMGEIQKFNKSKLKKTETQEKNPLPSKETIEQEKQAGES. Residue serine 2 is modified to N-acetylserine. Position 2 is a phosphoserine (serine 2). Lysine 4 is subject to N6-acetyllysine. Position 12 is an N6-acetyllysine; alternate (lysine 12). A Glycyl lysine isopeptide (Lys-Gly) (interchain with G-Cter in SUMO2); alternate cross-link involves residue lysine 12. Threonine 23 carries the post-translational modification Phosphothreonine. N6-acetyllysine is present on lysine 26. Residue serine 31 is modified to Phosphoserine. Lysine 32 carries the post-translational modification N6-acetyllysine. Positions 33-44 are enriched in basic and acidic residues; it reads ETIEQEKQAGES. Residue threonine 34 is modified to Phosphothreonine. N6-acetyllysine is present on lysine 39.

Belongs to the thymosin beta family. As to quaternary structure, identified in a complex composed of ACTA1, COBL, GSN AND TMSB4X. Interacts with SERPINB1. Post-translationally, acSDKP is inactivated by ACE, which removes the dipeptide Lys-Pro from its C-terminus.

Its subcellular location is the cytoplasm. It is found in the cytoskeleton. Its function is as follows. Plays an important role in the organization of the cytoskeleton. Binds to and sequesters actin monomers (G actin) and therefore inhibits actin polymerization. Potent inhibitor of bone marrow derived stem cell differentiation. Acts by inhibits the entry of hematopoietic pluripotent stem cells into the S-phase. The sequence is that of Thymosin beta-4 (TMSB4) from Notamacropus eugenii (Tammar wallaby).